The following is a 416-amino-acid chain: Pigment epithelium-derived factor (416 aa).

The N-terminal stretch at 1–20 (MQALVLLLWTGALLGFGRCQ) is a signal peptide. Phosphoserine is present on residues S112 and S225. N283 carries an N-linked (GlcNAc...) asparagine glycan.

It belongs to the serpin family. In terms of assembly, interacts with PNPLA2; this interaction stimulates the phospholipase A2 activity of PNPLA2. As to expression, retinal pigment epithelial cells. Located in the interphotoreceptor matrix (IPM) which is between the retinal pigment epithelium and the neural retina.

It is found in the secreted. The protein resides in the melanosome. Neurotrophic protein; induces extensive neuronal differentiation in retinoblastoma cells. Potent inhibitor of angiogenesis. As it does not undergo the S (stressed) to R (relaxed) conformational transition characteristic of active serpins, it exhibits no serine protease inhibitory activity. This is Pigment epithelium-derived factor (SERPINF1) from Bos taurus (Bovine).